Reading from the N-terminus, the 323-residue chain is Methenyltetrahydromethanopterin cyclohydrolase (323 aa).

Belongs to the MCH family. Homodimer.

The protein localises to the cytoplasm. The catalysed reaction is 5,10-methenyl-5,6,7,8-tetrahydromethanopterin + H2O = N(5)-formyl-5,6,7,8-tetrahydromethanopterin + H(+). It functions in the pathway one-carbon metabolism; formaldehyde degradation; formate from formaldehyde (H(4)MPT route): step 3/5. In terms of biological role, catalyzes the hydrolysis of methenyl-H(4)MPT(+) to 5-formyl-H(4)MPT. The polypeptide is Methenyltetrahydromethanopterin cyclohydrolase (mch) (Methylorubrum extorquens (strain ATCC 14718 / DSM 1338 / JCM 2805 / NCIMB 9133 / AM1) (Methylobacterium extorquens)).